Consider the following 387-residue polypeptide: Erythronate-4-phosphate dehydrogenase (387 aa).

Positions 45 and 67 each coordinate substrate. An NAD(+)-binding site is contributed by Asp-147. Residue Arg-208 is part of the active site. Asp-232 contacts NAD(+). Glu-237 is a catalytic residue. The active-site Proton donor is His-254. Position 257 (Gly-257) interacts with NAD(+). Position 258 (Tyr-258) interacts with substrate.

The protein belongs to the D-isomer specific 2-hydroxyacid dehydrogenase family. PdxB subfamily. In terms of assembly, homodimer.

It localises to the cytoplasm. The catalysed reaction is 4-phospho-D-erythronate + NAD(+) = (R)-3-hydroxy-2-oxo-4-phosphooxybutanoate + NADH + H(+). The protein operates within cofactor biosynthesis; pyridoxine 5'-phosphate biosynthesis; pyridoxine 5'-phosphate from D-erythrose 4-phosphate: step 2/5. Functionally, catalyzes the oxidation of erythronate-4-phosphate to 3-hydroxy-2-oxo-4-phosphonooxybutanoate. This is Erythronate-4-phosphate dehydrogenase from Shewanella sediminis (strain HAW-EB3).